The primary structure comprises 622 residues: Chaperone protein HscA homolog (622 aa).

This sequence belongs to the heat shock protein 70 family.

Chaperone involved in the maturation of iron-sulfur cluster-containing proteins. Has a low intrinsic ATPase activity which is markedly stimulated by HscB. This is Chaperone protein HscA homolog from Delftia acidovorans (strain DSM 14801 / SPH-1).